Consider the following 124-residue polypeptide: Small ribosomal subunit protein uS12 (124 aa).

At Asp89 the chain carries 3-methylthioaspartic acid. The tract at residues 105-124 is disordered; that stretch reads QGVKNRKQARSRYGAKKEKS. The segment covering 108–118 has biased composition (basic residues); that stretch reads KNRKQARSRYG.

It belongs to the universal ribosomal protein uS12 family. As to quaternary structure, part of the 30S ribosomal subunit. Contacts proteins S8 and S17. May interact with IF1 in the 30S initiation complex.

Its function is as follows. With S4 and S5 plays an important role in translational accuracy. In terms of biological role, interacts with and stabilizes bases of the 16S rRNA that are involved in tRNA selection in the A site and with the mRNA backbone. Located at the interface of the 30S and 50S subunits, it traverses the body of the 30S subunit contacting proteins on the other side and probably holding the rRNA structure together. The combined cluster of proteins S8, S12 and S17 appears to hold together the shoulder and platform of the 30S subunit. The sequence is that of Small ribosomal subunit protein uS12 from Mycobacterium leprae (strain Br4923).